Here is a 453-residue protein sequence, read N- to C-terminus: UDP-N-acetylmuramoylalanine--D-glutamate ligase (453 aa).

119–125 (GTNGKTT) lines the ATP pocket.

The protein belongs to the MurCDEF family.

The protein resides in the cytoplasm. The enzyme catalyses UDP-N-acetyl-alpha-D-muramoyl-L-alanine + D-glutamate + ATP = UDP-N-acetyl-alpha-D-muramoyl-L-alanyl-D-glutamate + ADP + phosphate + H(+). It participates in cell wall biogenesis; peptidoglycan biosynthesis. In terms of biological role, cell wall formation. Catalyzes the addition of glutamate to the nucleotide precursor UDP-N-acetylmuramoyl-L-alanine (UMA). This is UDP-N-acetylmuramoylalanine--D-glutamate ligase from Syntrophus aciditrophicus (strain SB).